A 384-amino-acid chain; its full sequence is 5-cytosine rRNA methyltransferase NSUN4 (384 aa).

The transit peptide at 1 to 25 (MAALTLRGVRELLKRVDLATVPRRH) directs the protein to the mitochondrion. Residues G185, G186, K187, and D204 each contribute to the S-adenosyl-L-methionine site. S206 is modified (phosphoserine). S-adenosyl-L-methionine contacts are provided by R209, D237, G238, and D255. Residue C310 is the Nucleophile of the active site.

It belongs to the class I-like SAM-binding methyltransferase superfamily. RsmB/NOP family. Heterodimer with MTERFD2/MTERF4; this interaction seems to be required for NSUN4 recruitment to the mitochondrial large ribosomal subunit.

The protein localises to the mitochondrion. The catalysed reaction is a cytidine in rRNA + S-adenosyl-L-methionine = a 5-methylcytidine in rRNA + S-adenosyl-L-homocysteine + H(+). It carries out the reaction a cytidine in mRNA + S-adenosyl-L-methionine = a 5-methylcytidine in mRNA + S-adenosyl-L-homocysteine + H(+). Mitochondrial RNA cytosine C(5)-methyltransferase that methylates cytosine to 5-methylcytosine (m5C) in various RNAs, such as rRNAs, mRNAs and some long non-coding RNAs (lncRNAs). Involved in mitochondrial ribosome small subunit (SSU) maturation by catalyzing methylation of mitochondrial 12S rRNA; the function is independent of MTERFD2/MTERF4 and assembled mitochondrial ribosome large subunit (LSU). Targeted to LSU by MTERFD2/MTERF4 and probably is involved in a final step in ribosome biogenesis to ensure that SSU and LSU are assembled. In vitro can methylate 16S rRNA of the LSU; the methylation is enhanced by MTERFD/MTERF4. Also acts as a regulator of innate immunity by marking double-stranded mitochondrial RNAs(mt-dsRNAs) generated in response to stress: catalyzes m5C modification on mitochondrial RNAs, such as a mRNAs and lncRNAs, with a preference for the termini of light-strand lncRNAs, promoting their degradation and cytosolic release. Modified light-strand lncRNAs are then recognized by C1QBP reader and recruited to the mitochondrial degradosome complex, which promotes their degradation. This Homo sapiens (Human) protein is 5-cytosine rRNA methyltransferase NSUN4.